The chain runs to 403 residues: Large ribosomal subunit protein uL3 (403 aa).

The tract at residues 1–37 (MSHRKFSAPRHGSLGFLPRKRSSRHRGKVKSFPKDDP) is disordered. The residue at position 13 (Ser-13) is a Phosphoserine. Residues 18-31 (PRKRSSRHRGKVKS) show a composition bias toward basic residues. A Glycyl lysine isopeptide (Lys-Gly) (interchain with G-Cter in SUMO2) cross-link involves residue Lys-39. Lys-136 carries the N6-acetyllysine modification. Glycyl lysine isopeptide (Lys-Gly) (interchain with G-Cter in SUMO2) cross-links involve residues Lys-224 and Lys-226. His-245 bears the Tele-methylhistidine mark. An N6-acetyllysine; alternate mark is found at Lys-286 and Lys-294. A Glycyl lysine isopeptide (Lys-Gly) (interchain with G-Cter in SUMO2); alternate cross-link involves residue Lys-286. A Glycyl lysine isopeptide (Lys-Gly) (interchain with G-Cter in SUMO1); alternate cross-link involves residue Lys-294. Residue Ser-304 is modified to Phosphoserine. Lys-366 carries the N6-acetyllysine; alternate modification. A Glycyl lysine isopeptide (Lys-Gly) (interchain with G-Cter in SUMO2); alternate cross-link involves residue Lys-366. Residue Lys-373 is modified to N6-acetyllysine. Residues Lys-386, Lys-393, and Lys-399 each participate in a glycyl lysine isopeptide (Lys-Gly) (interchain with G-Cter in SUMO2) cross-link.

The protein belongs to the universal ribosomal protein uL3 family. In terms of assembly, component of the large ribosomal subunit. Interacts with DHX33. Constitutively monomethylated at His-245 by METTL18. Methylation at His-245 regulates translation elongation by slowing ribosome traversal on tyrosine codons: slower elongation provides enough time for proper folding of synthesized proteins and prevents cellular aggregation of tyrosine-rich proteins. It is not required for incorporation of RPL3 into ribosomes.

Its subcellular location is the nucleus. The protein resides in the nucleolus. The protein localises to the cytoplasm. In terms of biological role, component of the large ribosomal subunit. The ribosome is a large ribonucleoprotein complex responsible for the synthesis of proteins in the cell. The polypeptide is Large ribosomal subunit protein uL3 (Rpl3) (Rattus norvegicus (Rat)).